The primary structure comprises 316 residues: Pyridoxal 5'-phosphate synthase subunit PdxS (316 aa).

Residue Asp44 participates in D-ribose 5-phosphate binding. Residue Lys101 is the Schiff-base intermediate with D-ribose 5-phosphate of the active site. Gly173 provides a ligand contact to D-ribose 5-phosphate. Residue Lys185 participates in D-glyceraldehyde 3-phosphate binding. Residues Gly234 and 255–256 contribute to the D-ribose 5-phosphate site; that span reads GS.

It belongs to the PdxS/SNZ family. In the presence of PdxT, forms a dodecamer of heterodimers.

The enzyme catalyses aldehydo-D-ribose 5-phosphate + D-glyceraldehyde 3-phosphate + L-glutamine = pyridoxal 5'-phosphate + L-glutamate + phosphate + 3 H2O + H(+). It participates in cofactor biosynthesis; pyridoxal 5'-phosphate biosynthesis. Functionally, catalyzes the formation of pyridoxal 5'-phosphate from ribose 5-phosphate (RBP), glyceraldehyde 3-phosphate (G3P) and ammonia. The ammonia is provided by the PdxT subunit. Can also use ribulose 5-phosphate and dihydroxyacetone phosphate as substrates, resulting from enzyme-catalyzed isomerization of RBP and G3P, respectively. This chain is Pyridoxal 5'-phosphate synthase subunit PdxS, found in Sulfurisphaera tokodaii (strain DSM 16993 / JCM 10545 / NBRC 100140 / 7) (Sulfolobus tokodaii).